A 224-amino-acid chain; its full sequence is V-type proton ATPase subunit S1-like protein (224 aa).

Residues 147–167 form a helical membrane-spanning segment; sequence PAFLIGLAMSLILLLVLAYAL.

This sequence belongs to the vacuolar ATPase subunit S1 family.

It localises to the membrane. The polypeptide is V-type proton ATPase subunit S1-like protein (ATP6AP1L) (Homo sapiens (Human)).